The following is a 256-amino-acid chain: tRNA (guanine-N(7)-)-methyltransferase (256 aa).

Residues 17–45 (TCETVPGLPQKKHYRQRAHSNPHSDHDIE) form a disordered region. Basic residues predominate over residues 26–36 (QKKHYRQRAHS). S-adenosyl-L-methionine contacts are provided by residues G74, 97 to 98 (EI), 132 to 133 (NA), and L152. D155 is an active-site residue. 230 to 232 (TEE) is a binding site for S-adenosyl-L-methionine.

Belongs to the class I-like SAM-binding methyltransferase superfamily. TrmB family.

It localises to the nucleus. It catalyses the reaction guanosine(46) in tRNA + S-adenosyl-L-methionine = N(7)-methylguanosine(46) in tRNA + S-adenosyl-L-homocysteine. It functions in the pathway tRNA modification; N(7)-methylguanine-tRNA biosynthesis. In terms of biological role, catalyzes the formation of N(7)-methylguanine at position 46 (m7G46) in tRNA. This chain is tRNA (guanine-N(7)-)-methyltransferase, found in Caenorhabditis elegans.